A 146-amino-acid polypeptide reads, in one-letter code: Ribonuclease H (146 aa).

The 142-residue stretch at Glu4 to Ser145 folds into the RNase H type-1 domain. Residues Asp13, Glu51, Asp73, and Asp137 each contribute to the Mg(2+) site.

Belongs to the RNase H family. In terms of assembly, monomer. Mg(2+) is required as a cofactor.

Its subcellular location is the cytoplasm. It carries out the reaction Endonucleolytic cleavage to 5'-phosphomonoester.. Endonuclease that specifically degrades the RNA of RNA-DNA hybrids. This is Ribonuclease H from Ehrlichia canis (strain Jake).